Reading from the N-terminus, the 401-residue chain is Elongation factor Tu 2 (401 aa).

The 200-residue stretch at 10 to 209 folds into the tr-type G domain; sequence KPHVNVGTIG…AVDEYIPTPV (200 aa). The tract at residues 19 to 26 is G1; the sequence is GHVDHGKT. Residue 19 to 26 coordinates GTP; sequence GHVDHGKT. Threonine 26 contributes to the Mg(2+) binding site. The G2 stretch occupies residues 60-64; the sequence is GITIA. The G3 stretch occupies residues 81-84; that stretch reads DCPG. GTP contacts are provided by residues 81 to 85 and 136 to 139; these read DCPGH and NKVD. The interval 136 to 139 is G4; it reads NKVD. The segment at 174-176 is G5; sequence SAL.

This sequence belongs to the TRAFAC class translation factor GTPase superfamily. Classic translation factor GTPase family. EF-Tu/EF-1A subfamily. Monomer.

It localises to the cytoplasm. The enzyme catalyses GTP + H2O = GDP + phosphate + H(+). In terms of biological role, GTP hydrolase that promotes the GTP-dependent binding of aminoacyl-tRNA to the A-site of ribosomes during protein biosynthesis. The sequence is that of Elongation factor Tu 2 from Roseiflexus castenholzii (strain DSM 13941 / HLO8).